Consider the following 449-residue polypeptide: HSPB1-associated protein 1 homolog (449 aa).

Residues 102–266 enclose the JmjC domain; that stretch reads WAYADYKYIA…DEARVAEALT (165 aa). The span at 385–395 shows a compositional bias: basic and acidic residues; that stretch reads DQDKLRSDNKL. The tract at residues 385 to 416 is disordered; that stretch reads DQDKLRSDNKLGQRSGQSVLQDTENPGGSGEM. The segment covering 396 to 410 has biased composition (polar residues); that stretch reads GQRSGQSVLQDTENP.

It is found in the cytoplasm. Its function is as follows. May play a role in cellular stress response. This is HSPB1-associated protein 1 homolog (hspbap1) from Danio rerio (Zebrafish).